The chain runs to 775 residues: MEQVEILRRFIQRVQAMKSPDHNGEDNFARDFMRLRRLSTKYRTEKIYPTATGEKEENVKKNRYKDILPFDHSRVKLTLKTPSQDSDYINANFIKGVYGPKAYVATQGPLANTVIDFWRMIWEYNVVIIVMACREFEMGRKKCERYWPLYGEDPITFAPFKISCENEQARTDYFIRTLLLEFQNESRRLYQFHYVNWPDHDVPSSFDSILDMISLMRKYQEHEDVPICIHCSAGCGRTGAICAIDYTWNLLKAGKIPEEFNVFNLIQEMRTQRHSAVQTKEQYELVHRAIAQLFEKQLQLYEIHGAQKIADGNEITTGTMVSSIDSEKQDSPPPKPPRTRSCLVEGDAKEEILQPPEPHPVPPILTPSPPSAFPTVTTVWQDSDRYHPKPVLHMASPEQHPADLNRSYDKSADPMGKSESAIEHIDKKLERNLSFEIKKVPLQEGPKSFDGNTLLNRGHAIKIKSASSSVVDRTSKPQELSAGALKVDDVSQNSCADCSAAHSHRAAESSEESQSNSHTPPRPDCLPLDKKGHVTWSLHGPENATPVPDSPDGKSPDNHSQTLKTVSSTPNSTAEEEAHDLTEHHNSSPLLKAPLSFTNPLHSDDSDSDGGSSDGAVTRNKTSISTASATVSPASSAESACTRRVLPMSIARQEVAGTPHSGAEKDADVSEESPPPLPERTPESFVLADMPVRPEWHELPNQEWSEQRESEGLTTSGNEKHDAGGIHTEASADSPPAFSDKKDQITKSPAEVTDIGFGNRCGKPKGPREPPSEWT.

An N-acetylmethionine modification is found at M1. S19 is subject to Phosphoserine. The region spanning 28-293 (FARDFMRLRR…ELVHRAIAQL (266 aa)) is the Tyrosine-protein phosphatase domain. Substrate-binding positions include D199, 231–237 (CSAGCGR), and Q278. Residue C231 is the Phosphocysteine intermediate of the active site. The tract at residues 322–341 (SSIDSEKQDSPPPKPPRTRS) is disordered. 4 positions are modified to phosphoserine: S331, S434, S448, and S467. The interaction with TGFB1I1 stretch occupies residues 344–437 (VEGDAKEEIL…KLERNLSFEI (94 aa)). Residues 462–775 (KIKSASSSVV…GPREPPSEWT (314 aa)) are disordered. T519 carries the phosphothreonine modification. Phosphoserine occurs at positions 550 and 567. Residues 558-573 (NHSQTLKTVSSTPNST) show a composition bias toward polar residues. T569 is subject to Phosphothreonine. Position 596 is a phosphoserine (S596). At T598 the chain carries Phosphothreonine. S603, S606, S608, and S613 each carry phosphoserine. Over residues 622–640 (TSISTASATVSPASSAESA) the composition is skewed to low complexity. Position 673 is a phosphoserine (S673). Residues 692–711 (VRPEWHELPNQEWSEQRESE) are compositionally biased toward basic and acidic residues. The residue at position 748 (S748) is a Phosphoserine. Positions 766 to 775 (GPREPPSEWT) are enriched in basic and acidic residues.

The protein belongs to the protein-tyrosine phosphatase family. Non-receptor class 4 subfamily. As to quaternary structure, interacts with PSTPIP1 and TGFB1I1. Interacts with PTK2B/PYK2. Interacts with LPXN. Interacts with SORBS2; this interaction greatly enhances WASF1 dephosphorylation and might mediate partial translocation to focal adhesion sites. In terms of processing, phosphorylated by STK24/MST3 and this results in inhibition of its activity.

It is found in the cytoplasm. Its subcellular location is the cell junction. The protein resides in the focal adhesion. The protein localises to the cell projection. It localises to the podosome. The catalysed reaction is O-phospho-L-tyrosyl-[protein] + H2O = L-tyrosyl-[protein] + phosphate. In terms of biological role, dephosphorylates a range of proteins, and thereby regulates cellular signaling cascades. Dephosphorylates cellular tyrosine kinases, such as ERBB2 and PTK2B/PYK2, and thereby regulates signaling via ERBB2 and PTK2B/PYK2. Selectively dephosphorylates ERBB2 phosphorylated at 'Tyr-1112', 'Tyr-1196', and/or 'Tyr-1248'. The protein is Tyrosine-protein phosphatase non-receptor type 12 (Ptpn12) of Mus musculus (Mouse).